Consider the following 661-residue polypeptide: Sperm transmembrane protein 9 (661 aa).

A signal peptide spans 1-16; the sequence is MNVILVLVVLFFAGDC. Residues 17-618 are Extracellular-facing; the sequence is AKIRKIIDFL…MTNRLMKNYE (602 aa). The region spanning 52-90 is the EGF-like 1 domain; sequence NFNPCLENPKICSNRGKCLHENGNFYCICPVTHYGKTCE. Intrachain disulfides connect Cys-56/Cys-69, Cys-63/Cys-78, and Cys-80/Cys-89. 4 N-linked (GlcNAc...) asparagine glycosylation sites follow: Asn-105, Asn-106, Asn-134, and Asn-190. The EGF-like 2 domain maps to 210 to 259; it reads QISACFDTQCDNGGICEDVVDWKTKTVTATCKCPSAIELIGGTVTGENCE. 3 disulfide bridges follow: Cys-214/Cys-225, Cys-219/Cys-240, and Cys-242/Cys-258. N-linked (GlcNAc...) asparagine glycans are attached at residues Asn-279, Asn-290, Asn-316, and Asn-338. Residues 377–379 carry the Cell attachment site motif; the sequence is RGD. EGF-like domains lie at 377-414, 519-557, and 559-600; these read RGDR…EKCE, HTNP…SLCE, and VDDS…LDCN. 9 disulfide bridges follow: Cys-385-Cys-402, Cys-393-Cys-404, Cys-413-Cys-419, Cys-523-Cys-534, Cys-528-Cys-545, Cys-547-Cys-556, Cys-563-Cys-576, Cys-571-Cys-588, and Cys-590-Cys-599. A glycan (N-linked (GlcNAc...) asparagine) is linked at Asn-549. The chain crosses the membrane as a helical span at residues 619-639; the sequence is FSLPLVACFVSLAILLPVIVI. Topologically, residues 640 to 661 are cytoplasmic; that stretch reads SRRRQGRVEEAKKTSEVKTENP.

As to expression, expressed in spermatids, during spermogenesis expression is primarily localized to the pseudopod.

The protein localises to the cytoplasm. The protein resides in the membrane. Functionally, required for fertilization. May be required for cell adhesion and/or function as a signaling molecule. This Caenorhabditis elegans protein is Sperm transmembrane protein 9 (spe-9).